The sequence spans 431 residues: Glucose-1-phosphate adenylyltransferase (431 aa).

Alpha-D-glucose 1-phosphate-binding positions include tyrosine 109, glycine 175, 190–191 (EK), and serine 208.

This sequence belongs to the bacterial/plant glucose-1-phosphate adenylyltransferase family. Homotetramer.

The enzyme catalyses alpha-D-glucose 1-phosphate + ATP + H(+) = ADP-alpha-D-glucose + diphosphate. It participates in glycan biosynthesis; glycogen biosynthesis. Functionally, involved in the biosynthesis of ADP-glucose, a building block required for the elongation reactions to produce glycogen. Catalyzes the reaction between ATP and alpha-D-glucose 1-phosphate (G1P) to produce pyrophosphate and ADP-Glc. The chain is Glucose-1-phosphate adenylyltransferase from Alteromonas mediterranea (strain DSM 17117 / CIP 110805 / LMG 28347 / Deep ecotype).